Consider the following 423-residue polypeptide: Amino sugar nitrososynthase RubN8 (423 aa).

The protein belongs to the acyl-CoA dehydrogenase family. FAD serves as cofactor.

It functions in the pathway antibiotic biosynthesis. Its function is as follows. Nitrososynthase involved in the biosynthesis of rubradirin, an ansamycin antibiotic. In vitro, catalyzes the double-oxidation of TDP-L-epi-vancosamine to TDP-L-epi-vancosonitrose. In vivo, probably catalyzes the formation of D-rubranitrose, the nitro sugar moiety of rubradirin. This is Amino sugar nitrososynthase RubN8 from Streptomyces rubradiris (Streptomyces achromogenes subsp. rubradiris).